Reading from the N-terminus, the 126-residue chain is Thioredoxin domain-containing protein, mitochondrial (126 aa).

The 107-residue stretch at 14–120 (SQKIATNTSF…ILEFLNHIET (107 aa)) folds into the Thioredoxin domain.

This sequence belongs to the thioredoxin family.

It localises to the mitochondrion. In Dictyostelium discoideum (Social amoeba), this protein is Thioredoxin domain-containing protein, mitochondrial.